The following is a 403-amino-acid chain: Rhomboid-like protein 15 (403 aa).

A run of 5 helical transmembrane segments spans residues 22–42 (IPFL…ICLL), 70–90 (AIIF…LVPM), 103–123 (LLYL…LIAS), 141–161 (AIGF…LSGV), and 176–196 (LYPW…SLLG). Serine 145 serves as the catalytic Nucleophile. Histidine 197 functions as the Charge relay system in the catalytic mechanism. Residues 198 to 218 (LCGILSGFSYSYGLFNFLMPG) traverse the membrane as a helical segment. Residues 282-316 (EASNQSSEDSRFPGRGRTLSTARDPTAPAGETDPN) form a disordered region. Residues 361 to 401 (AASEEQIQKLVAMGFDRTQVEVALAAADDDLTVAVEILMSQ) form the UBA domain.

It belongs to the peptidase S54 family.

The protein resides in the membrane. Functionally, probable rhomboid-type serine protease that catalyzes intramembrane proteolysis. May function in senescence. The chain is Rhomboid-like protein 15 from Arabidopsis thaliana (Mouse-ear cress).